A 264-amino-acid chain; its full sequence is Protein ADMETOS (264 aa).

As to expression, paternally imprinted expression in the endosperm.

In terms of biological role, product of a dosage-sensitive gene that contributes to the maintenance of paternally and maternally imprinted gene expression in the endosperm in order to balance parental contributions. Underlies postzygotic reproductive isolation by promoting triploid seed arrest in a genetic dosage-dependent manner, thus being a component of postzygotic interploidy hybridization barriers. The polypeptide is Protein ADMETOS (Arabidopsis thaliana (Mouse-ear cress)).